A 271-amino-acid chain; its full sequence is Small ribosomal subunit protein uS2 (271 aa).

A disordered region spans residues 235 to 271 (FDAKNPLKPQNYNAPNKRPYQDSPRKPSYQNQNQNQI). Residues 262 to 271 (SYQNQNQNQI) are compositionally biased toward polar residues.

This sequence belongs to the universal ribosomal protein uS2 family.

The polypeptide is Small ribosomal subunit protein uS2 (Onion yellows phytoplasma (strain OY-M)).